Reading from the N-terminus, the 264-residue chain is Thymidylate synthase (264 aa).

DUMP-binding positions include arginine 21 and 126–127; that span reads RR. The Nucleophile role is filled by cysteine 146. DUMP-binding positions include 166–169, asparagine 177, and 207–209; these read RSAD and HLY. Aspartate 169 is a (6R)-5,10-methylene-5,6,7,8-tetrahydrofolate binding site. Alanine 263 lines the (6R)-5,10-methylene-5,6,7,8-tetrahydrofolate pocket.

It belongs to the thymidylate synthase family. Bacterial-type ThyA subfamily. Homodimer.

It is found in the cytoplasm. The enzyme catalyses dUMP + (6R)-5,10-methylene-5,6,7,8-tetrahydrofolate = 7,8-dihydrofolate + dTMP. It functions in the pathway pyrimidine metabolism; dTTP biosynthesis. In terms of biological role, catalyzes the reductive methylation of 2'-deoxyuridine-5'-monophosphate (dUMP) to 2'-deoxythymidine-5'-monophosphate (dTMP) while utilizing 5,10-methylenetetrahydrofolate (mTHF) as the methyl donor and reductant in the reaction, yielding dihydrofolate (DHF) as a by-product. This enzymatic reaction provides an intracellular de novo source of dTMP, an essential precursor for DNA biosynthesis. The protein is Thymidylate synthase of Halorhodospira halophila (strain DSM 244 / SL1) (Ectothiorhodospira halophila (strain DSM 244 / SL1)).